The primary structure comprises 1154 residues: Nitric oxide synthase, inducible (1154 aa).

Residues 22–58 (KDINNNVEKPPGATPSPSTQDDLKNHKHHNDSPQPLT) form a disordered region. The DINNN-motif; mediates interaction with SPSB1, SPSB2 and SPSB4 signature appears at 23-27 (DINNN). Zn(2+) is bound by residues cysteine 107 and cysteine 112. Cysteine 197 contacts heme b. L-arginine contacts are provided by glutamine 260, tryptophan 369, tyrosine 370, and glutamate 374. (6R)-L-erythro-5,6,7,8-tetrahydrobiopterin contacts are provided by arginine 378, isoleucine 459, tryptophan 460, and phenylalanine 473. Tyrosine 488 serves as a coordination point for heme b. A calmodulin-binding region spans residues 512–532 (LKVLVKAVLFASMLMRKTMAS). A Flavodoxin-like domain is found at 536 to 674 (VTILFATETG…AFRCWAVQTF (139 aa)). FMN is bound by residues threonine 542, glutamate 543, threonine 544, lysine 546, and serine 547. Tyrosine 572 bears the Phosphotyrosine mark. Serine 588, threonine 589, serine 625, cysteine 632, and glutamate 658 together coordinate FMN. The region spanning 727 to 967 (KNVFTLRLKS…VRSAGNFKLP (241 aa)) is the FAD-binding FR-type domain. Position 747 (arginine 747) interacts with NADP(+). Residues histidine 769, arginine 903, tyrosine 905, serine 906, threonine 921, alanine 923, tyrosine 927, valine 940, cysteine 941, and serine 942 each coordinate FAD. NADP(+) contacts are provided by threonine 981, arginine 1014, serine 1043, arginine 1044, lysine 1050, tyrosine 1052, glutamine 1054, and aspartate 1087.

Belongs to the NOS family. Homodimer. Interacts with NHERF1. Interacts with GAPDH; induced by oxidatively-modified low-densitity lipoprotein (LDL(ox)). Interacts with S100A8 and S100A9 to form the iNOS-S100A8/9 transnitrosylase complex. Interacts with SPSB1, SPSB2 and SPSB4. Interacts with ELOC and CUL5 in the presence of SPSB1 or SPSB2 or SPSB4. Forms a complex with ASL, ASS1 and HSP90AA1; the complex regulates cell-autonomous L-arginine synthesis and citrulline recycling while channeling extracellular L-arginine to nitric oxide synthesis pathway. Heme b serves as cofactor. Requires FAD as cofactor. The cofactor is FMN. (6R)-L-erythro-5,6,7,8-tetrahydrobiopterin is required as a cofactor. In terms of processing, polyubiquitinated; mediated by SPSB1, SPSB2 and SPSB4, leading to proteasomal degradation.

Its subcellular location is the cytoplasm. The protein localises to the cytosol. The enzyme catalyses 2 L-arginine + 3 NADPH + 4 O2 + H(+) = 2 L-citrulline + 2 nitric oxide + 3 NADP(+) + 4 H2O. With respect to regulation, regulated by calcium/calmodulin. Produces nitric oxide (NO) which is a messenger molecule with diverse functions throughout the body. In macrophages, NO mediates tumoricidal and bactericidal actions. Also has nitrosylase activity and mediates cysteine S-nitrosylation of cytoplasmic target proteins such PTGS2/COX2. As component of the iNOS-S100A8/9 transnitrosylase complex involved in the selective inflammatory stimulus-dependent S-nitrosylation of GAPDH implicated in regulation of the GAIT complex activity and probably multiple targets including ANXA5, EZR, MSN and VIM. Involved in inflammation, enhances the synthesis of pro-inflammatory mediators such as IL6 and IL8. In Canis lupus familiaris (Dog), this protein is Nitric oxide synthase, inducible (NOS2).